The following is a 147-amino-acid chain: uncharacterized protein (147 aa).

This sequence to M.jannaschii MJ1086 N-terminal region.

This is an uncharacterized protein from Methanocaldococcus jannaschii (strain ATCC 43067 / DSM 2661 / JAL-1 / JCM 10045 / NBRC 100440) (Methanococcus jannaschii).